Reading from the N-terminus, the 146-residue chain is Probable trivalent organoarsenical cleaving enzyme (146 aa).

A VOC domain is found at 2–118; the sequence is KYVHVGVNVV…DGNEWEFFYT (117 aa). 2 residues coordinate Fe(2+): histidine 5 and histidine 62. Cysteine 95 and cysteine 96 together coordinate roxarsone (III). Residue glutamate 114 participates in Fe(2+) binding.

It to M.tuberculosis Rv2641. Fe(2+) serves as cofactor.

It carries out the reaction methylarsonous acid + AH2 + O2 = arsenite + methanol + A + H(+). It catalyses the reaction roxarsone (III) + AH2 + O2 = 4-hydroxy-3-nitrocyclohexa-2,5-dien-1-one + arsenite + A + H(+). The catalysed reaction is nitarsone (III) + AH2 + O2 = 4-nitrocyclohexa-2,5-dien-1-one + arsenite + A + H(+). The enzyme catalyses 4-aminophenylarsonous acid + AH2 + O2 = 4-aminocyclohexa-2,5-dien-1-one + arsenite + A. Functionally, nonheme iron-dependent dioxygenase that can break carbon-arsenic bonds, playing a role in the detoxification of environmental organoarsenical compounds. Catalyzes the oxygen-dependent demethylation of highly toxic methylarsonous acid (MAs(III)) to arsenite, which can then be exported out of the cell. Can also cleave the C-As bond in several trivalent aromatic arsenicals, including roxarsone (III), nitarsone (III) and (4-aminophenyl)arsonous acid. Organoarsenical degradation by this enzyme is proposed to have a significant impact on the arsenic biogeocycle that maintains a balance between organic and inorganic species. The polypeptide is Probable trivalent organoarsenical cleaving enzyme (yqcK) (Bacillus subtilis (strain 168)).